The chain runs to 606 residues: Calmegin (606 aa).

An N-terminal signal peptide occupies residues 1-19 (MRFQGFWLCLGLLFISVNA). At 20–466 (EFMDDSVEME…QLMSATEQRP (447 aa)) the chain is on the lumenal side. Lys-124 carries the N6-acetyllysine modification. Cysteines 147 and 181 form a disulfide. The disordered stretch occupies residues 255–308 (PPINPPKEIEDPTDEKPDDWDERAKIPDASAVKPEDWDESEPPQIVDSSAVKPD). A run of 8 repeats spans residues 263–276 (IEDP…DWDE), 280–293 (IPDA…DWDE), 299–312 (IVDS…GWLD), 318–331 (IPDP…DWNE), 335–348 (GEWE…PACR), 352–365 (GEWS…PKYK), 366–379 (GIWR…PNYQ), and 380–393 (GIWS…PDYF). A compositionally biased stretch (acidic residues) spans 265–275 (DPTDEKPDDWD). The interaction with PPIB stretch occupies residues 313–346 (NEPEFIPDPNAEKPFDWNEDMDGEWEAPHISNPA). The cysteines at positions 347 and 351 are disulfide-linked. A helical membrane pass occupies residues 467-487 (WLWFIYLLTAALPIALIGSFC). The Cytoplasmic portion of the chain corresponds to 488 to 606 (WPRKVKKKYE…SVRKRRVRKE (119 aa)). Residues 518–544 (EVKEEKAALEKPVDLEEEKKQSDGEIV) are compositionally biased toward basic and acidic residues. Positions 518-606 (EVKEEKAALE…SVRKRRVRKE (89 aa)) are disordered. Residues 545–567 (EKEEEGEPEEKSEEEIEIIEGQE) are compositionally biased toward acidic residues. Ser-556, Ser-572, Ser-575, Ser-577, Ser-587, Ser-590, and Ser-597 each carry phosphoserine. Residues 568–579 (EGNKSNKSGSED) show a composition bias toward basic and acidic residues. The span at 597 to 606 (SVRKRRVRKE) shows a compositional bias: basic residues.

Belongs to the calreticulin family. Interacts with PPIB and PDILT. Interacts with ADAM2.

The protein localises to the endoplasmic reticulum membrane. Its function is as follows. Functions during spermatogenesis as a chaperone for a range of client proteins that are important for sperm adhesion onto the egg zona pellucida and for subsequent penetration of the zona pellucida. Required for normal sperm migration from the uterus into the oviduct. Required for normal male fertility. Binds calcium ions. The polypeptide is Calmegin (CLGN) (Bos taurus (Bovine)).